A 533-amino-acid polypeptide reads, in one-letter code: Flavin-containing monooxygenase 5 (533 aa).

Arg-5 is modified (dimethylated arginine). FAD-binding positions include 10–14, Glu-33, and 41–42; these read GSGAS and LW. Residue Ser-54 is modified to Phosphoserine. Tyr-56 is subject to Phosphotyrosine. Ser-58 bears the Phosphoserine mark. Position 62-63 (62-63) interacts with FAD; it reads NT. Residue 196–199 participates in NADP(+) binding; that stretch reads SGGD. Thr-284 is modified (phosphothreonine). Position 401 is a phosphoserine (Ser-401). Residues 513–533 traverse the membrane as a helical segment; sequence LVTVRVLMLAVTFLAVILAYF.

It belongs to the FMO family. Requires FAD as cofactor.

It is found in the microsome membrane. Its subcellular location is the endoplasmic reticulum membrane. It carries out the reaction N,N-dimethylaniline + NADPH + O2 + H(+) = N,N-dimethylaniline N-oxide + NADP(+) + H2O. It catalyses the reaction NADPH + O2 + H(+) = H2O2 + NADP(+). The enzyme catalyses heptan-2-one + NADPH + O2 + H(+) = pentyl acetate + NADP(+) + H2O. The catalysed reaction is octan-3-one + NADPH + O2 + H(+) = pentyl propanoate + NADP(+) + H2O. It carries out the reaction octan-3-one + NADPH + O2 + H(+) = ethyl hexanoate + NADP(+) + H2O. It catalyses the reaction hexan-3-one + NADPH + O2 + H(+) = ethyl butanoate + NADP(+) + H2O. The enzyme catalyses hexan-3-one + NADPH + O2 + H(+) = propyl propanoate + NADP(+) + H2O. The catalysed reaction is heptan-4-one + NADPH + O2 + H(+) = propyl butanoate + NADP(+) + H2O. It carries out the reaction (2E)-geranial + NADPH + O2 + H(+) = (1E)-2,6-dimethylhepta-1,5-dien-1-yl formate + NADP(+) + H2O. It catalyses the reaction sulcatone + NADPH + O2 + H(+) = 4-methylpent-3-en-1-yl acetate + NADP(+) + H2O. Functionally, acts as a Baeyer-Villiger monooxygenase on a broad range of substrates. Catalyzes the insertion of an oxygen atom into a carbon-carbon bond adjacent to a carbonyl, which converts ketones to esters. Active on diverse carbonyl compounds, whereas soft nucleophiles are mostly non- or poorly reactive. In contrast with other forms of FMO it is non- or poorly active on 'classical' substrates such as drugs, pesticides, and dietary components containing soft nucleophilic heteroatoms. Able to oxidize drug molecules bearing a carbonyl group on an aliphatic chain, such as nabumetone and pentoxifylline. Also, in the absence of substrates, shows slow but yet significant NADPH oxidase activity. Acts as a positive modulator of cholesterol biosynthesis as well as glucose homeostasis, promoting metabolic aging via pleiotropic effects. The polypeptide is Flavin-containing monooxygenase 5 (Rattus norvegicus (Rat)).